Consider the following 847-residue polypeptide: Alanine--tRNA ligase (847 aa).

Residues histidine 554, histidine 558, cysteine 656, and histidine 660 each contribute to the Zn(2+) site.

The protein belongs to the class-II aminoacyl-tRNA synthetase family. Requires Zn(2+) as cofactor.

The protein localises to the cytoplasm. The catalysed reaction is tRNA(Ala) + L-alanine + ATP = L-alanyl-tRNA(Ala) + AMP + diphosphate. Catalyzes the attachment of alanine to tRNA(Ala) in a two-step reaction: alanine is first activated by ATP to form Ala-AMP and then transferred to the acceptor end of tRNA(Ala). Also edits incorrectly charged Ser-tRNA(Ala) and Gly-tRNA(Ala) via its editing domain. This is Alanine--tRNA ligase from Helicobacter pylori (strain ATCC 700392 / 26695) (Campylobacter pylori).